Consider the following 275-residue polypeptide: Dermonecrotic toxin SpeSicTox-betaIIA3i (275 aa).

His-5 is a catalytic residue. Positions 25 and 27 each coordinate Mg(2+). The Nucleophile role is filled by His-41. Disulfide bonds link Cys-45/Cys-51 and Cys-47/Cys-190. Residue Asp-85 participates in Mg(2+) binding.

This sequence belongs to the arthropod phospholipase D family. Class II subfamily. It depends on Mg(2+) as a cofactor. In terms of tissue distribution, expressed by the venom gland.

Its subcellular location is the secreted. The catalysed reaction is an N-(acyl)-sphingosylphosphocholine = an N-(acyl)-sphingosyl-1,3-cyclic phosphate + choline. It catalyses the reaction an N-(acyl)-sphingosylphosphoethanolamine = an N-(acyl)-sphingosyl-1,3-cyclic phosphate + ethanolamine. It carries out the reaction a 1-acyl-sn-glycero-3-phosphocholine = a 1-acyl-sn-glycero-2,3-cyclic phosphate + choline. The enzyme catalyses a 1-acyl-sn-glycero-3-phosphoethanolamine = a 1-acyl-sn-glycero-2,3-cyclic phosphate + ethanolamine. In terms of biological role, dermonecrotic toxins cleave the phosphodiester linkage between the phosphate and headgroup of certain phospholipids (sphingolipid and lysolipid substrates), forming an alcohol (often choline) and a cyclic phosphate. This toxin acts on sphingomyelin (SM). It may also act on ceramide phosphoethanolamine (CPE), lysophosphatidylcholine (LPC) and lysophosphatidylethanolamine (LPE), but not on lysophosphatidylserine (LPS), and lysophosphatidylglycerol (LPG). It acts by transphosphatidylation, releasing exclusively cyclic phosphate products as second products. Induces dermonecrosis, hemolysis, increased vascular permeability, edema, inflammatory response, and platelet aggregation. In Sicarius peruensis (Six-eyed sand spider), this protein is Dermonecrotic toxin SpeSicTox-betaIIA3i.